The sequence spans 307 residues: MEIQFLGTGAGQPSKSRNTQAIALKMLDERNEIWLFDCGEASQHQILNTAIKPRKITKIFITHLHGDHIFGLPGFLSSRSFQSSDEQTDLDLYGPVGIKEFVLAGLRISGSHLGYRINFHEIDSAGKIFEDDSFEVYTDLLDHTIFCLGYRVVEKNRVGELDANALKEAGLPFGPLFGKIKKGEVVDYDGKTFDPKDYIGADKVGKIVTILGDTRKTNTAVRLAWQADLLVHEATYEAAESKMARAHGHSTTKQAADVAKEAGVNRLLLTHISARYVGPLVGQLVREAQDVHANTFVAKDLYEEKIG.

H63, H65, D67, H68, H143, D213, and H271 together coordinate Zn(2+). Catalysis depends on D67, which acts as the Proton acceptor.

The protein belongs to the RNase Z family. Homodimer. Zn(2+) is required as a cofactor.

The catalysed reaction is Endonucleolytic cleavage of RNA, removing extra 3' nucleotides from tRNA precursor, generating 3' termini of tRNAs. A 3'-hydroxy group is left at the tRNA terminus and a 5'-phosphoryl group is left at the trailer molecule.. In terms of biological role, zinc phosphodiesterase, which displays some tRNA 3'-processing endonuclease activity. Probably involved in tRNA maturation, by removing a 3'-trailer from precursor tRNA. This chain is Ribonuclease Z, found in Lactococcus lactis subsp. cremoris (strain MG1363).